An 87-amino-acid chain; its full sequence is Tachykinin-1 (87 aa).

The signal sequence occupies residues 1-22; it reads MIRVGLILCCIFIAGVFEASSA. The propeptide occupies 23–37; that stretch reads DDMLTAHNLIKRSEV. Met-49 is modified (methionine amide). Positions 52-87 are excised as a propeptide; that stretch reads SEELTRRLIQHPGSMSETSKRGPPKKVSRRPYILKK. Residues 61–87 form a disordered region; that stretch reads QHPGSMSETSKRGPPKKVSRRPYILKK. Residues 73–87 show a composition bias toward basic residues; that stretch reads GPPKKVSRRPYILKK.

Belongs to the tachykinin family. In terms of tissue distribution, expressed in the posterior salivary gland and more specifically in the mucus-secreting gland cells.

Its subcellular location is the secreted. Functionally, tachykinins are active peptides which excite neurons, evoke behavioral responses, are potent vasodilators and secretagogues, and contract (directly or indirectly) many smooth muscles. This is Tachykinin-1 from Octopus vulgaris (Common octopus).